The chain runs to 263 residues: Transcription factor 19-like protein (263 aa).

One can recognise an FHA domain in the interval 31–88 (YGLGCRADLCDVALRPQQEPGLISGVHAELHAELQGDDWRVSLEDHSSQGTLVNNVRL). Residue Ser-78 is modified to Phosphoserine. Disordered stretches follow at residues 140 to 164 (SKGE…PLST) and 189 to 225 (LTFS…RKSA).

The protein localises to the nucleus. In terms of biological role, potential transcription factor that may play a role in the regulation of genes involved in cell cycle G1/S transition. May bind to regulatory elements of genes, including the promoter of the transcription factor FOXO1. This is Transcription factor 19-like protein (Tcf19) from Mus musculus (Mouse).